Consider the following 202-residue polypeptide: Dephospho-CoA kinase (202 aa).

The region spanning 3–202 (IFGLTGGIGS…ISHRSKYLSC (200 aa)) is the DPCK domain. 11–16 (GSGKSL) is an ATP binding site.

Belongs to the CoaE family.

The protein localises to the cytoplasm. It catalyses the reaction 3'-dephospho-CoA + ATP = ADP + CoA + H(+). Its pathway is cofactor biosynthesis; coenzyme A biosynthesis; CoA from (R)-pantothenate: step 5/5. Catalyzes the phosphorylation of the 3'-hydroxyl group of dephosphocoenzyme A to form coenzyme A. This Ehrlichia chaffeensis (strain ATCC CRL-10679 / Arkansas) protein is Dephospho-CoA kinase.